Reading from the N-terminus, the 407-residue chain is Imidazolonepropionase (407 aa).

Fe(3+) is bound by residues His68 and His70. Zn(2+)-binding residues include His68 and His70. 4-imidazolone-5-propanoate contacts are provided by Arg77, Tyr140, and His173. Tyr140 serves as a coordination point for N-formimidoyl-L-glutamate. His238 provides a ligand contact to Fe(3+). A Zn(2+)-binding site is contributed by His238. Residue Gln241 coordinates 4-imidazolone-5-propanoate. Asp313 is a Fe(3+) binding site. Residue Asp313 participates in Zn(2+) binding. N-formimidoyl-L-glutamate is bound by residues Asn315 and Gly317. Thr318 is a binding site for 4-imidazolone-5-propanoate.

The protein belongs to the metallo-dependent hydrolases superfamily. HutI family. It depends on Zn(2+) as a cofactor. The cofactor is Fe(3+).

The protein resides in the cytoplasm. It carries out the reaction 4-imidazolone-5-propanoate + H2O = N-formimidoyl-L-glutamate. It participates in amino-acid degradation; L-histidine degradation into L-glutamate; N-formimidoyl-L-glutamate from L-histidine: step 3/3. Functionally, catalyzes the hydrolytic cleavage of the carbon-nitrogen bond in imidazolone-5-propanoate to yield N-formimidoyl-L-glutamate. It is the third step in the universal histidine degradation pathway. The protein is Imidazolonepropionase of Burkholderia ambifaria (strain MC40-6).